A 473-amino-acid chain; its full sequence is Hexaprenyl pyrophosphate synthase, mitochondrial (473 aa).

Residues K84, R87, and H186 each contribute to the isopentenyl diphosphate site. Residues D193 and D197 each coordinate Mg(2+). R202 contributes to the an all-trans-polyprenyl diphosphate binding site. R203 provides a ligand contact to isopentenyl diphosphate. An all-trans-polyprenyl diphosphate is bound by residues K323, T324, Q361, and K378.

The protein belongs to the FPP/GGPP synthase family. Mg(2+) is required as a cofactor.

Its subcellular location is the mitochondrion inner membrane. Its pathway is cofactor biosynthesis; ubiquinone biosynthesis. In terms of biological role, assembly of polyisoprenoid side chains. The polyprenyl synthase of coenzyme Q biosynthesis catalyzes the formation from isopentenyl diphosphate of all trans-polyprenyl pyrophosphates generally ranging in length of between 6 and 10 isoprene units depending on the species. The protein is Hexaprenyl pyrophosphate synthase, mitochondrial (COQ1) of Saccharomyces cerevisiae (strain ATCC 204508 / S288c) (Baker's yeast).